We begin with the raw amino-acid sequence, 233 residues long: 2-phytyl-1,4-naphtoquinone methyltransferase (233 aa).

Belongs to the class I-like SAM-binding methyltransferase superfamily. MenG/UbiE family.

The enzyme catalyses demethylphylloquinol + S-adenosyl-L-methionine = phylloquinol + S-adenosyl-L-homocysteine + H(+). It functions in the pathway cofactor biosynthesis; phylloquinone biosynthesis. Methyltransferase required for the conversion of 2-phytyl-1,4-beta-naphthoquinol to phylloquinol. The chain is 2-phytyl-1,4-naphtoquinone methyltransferase from Synechococcus elongatus (strain ATCC 33912 / PCC 7942 / FACHB-805) (Anacystis nidulans R2).